The primary structure comprises 199 residues: UPF0462 protein C4orf33 (199 aa).

It belongs to the UPF0462 family.

This chain is UPF0462 protein C4orf33 (C4orf33), found in Homo sapiens (Human).